Reading from the N-terminus, the 599-residue chain is Peptidyl-Asp metalloendopeptidase (599 aa).

Positions 1-20 (MKKSLLCSTLALAVASAAQA) are cleaved as a signal peptide. His-164 lines the Zn(2+) pocket. Residue Glu-165 is part of the active site. Zn(2+) is bound by residues His-168 and His-174. The disordered stretch occupies residues 265–285 (PTKVPGTVNPGSGGDTPTPPD). The 126-residue stretch at 458–583 (YDFESGIGGW…KRAELMILSG (126 aa)) folds into the CBM-cenC domain.

This sequence belongs to the peptidase M72 family. Interacts with BamI, the product of its coregulated adjacent gene, which inhibits its protease activity. The cofactor is Zn(2+). Made as a membrane-associated pre-pro-protein, which is exported to the periplasm with removal of the signal peptide, leading to a protein with a molecular mass of 65 kDa, that likely contains the metzincin domain plus tandem carbohydrate-binding domains. Undergoes processing during export to the extracellular milieu, probably by autocatalysis, yielding a (mature length) 25 kDa protein that most likely corresponds to the metzincin domain only.

Its subcellular location is the secreted. The enzyme catalyses Cleavage of Xaa-|-Asp, Xaa-|-Glu and Xaa-|-cysteic acid bonds.. Its activity is regulated as follows. Is inhibited by BamI, the product of its coregulated adjacent gene. In terms of biological role, metalloprotease with endopeptidase activity. Specifically cleaves on the N-terminal side of aspartyl, glutamyl and cysteic acid residues. Mep72 appears to be a secreted biofilm-specific regulator that affects the processing of a very specific subset of virulence factors exported by the type III secretion machinery as well as flagellar proteins. Binds directly to ExoS and PcrV and affects the processing of these proteins in the biofilm secretome, but contrary to expectation, Mep72 seems to protect these targets against proteolytic processing/degradation. In Pseudomonas aeruginosa (strain ATCC 15692 / DSM 22644 / CIP 104116 / JCM 14847 / LMG 12228 / 1C / PRS 101 / PAO1), this protein is Peptidyl-Asp metalloendopeptidase.